Reading from the N-terminus, the 50-residue chain is Basic phospholipase A2 Bmaj-9 (50 aa).

The Ca(2+) site is built by Tyr-27, Gly-29, and Gly-31. Cys-28 and Cys-45 are joined by a disulfide. His-48 is a catalytic residue. Asp-49 is a binding site for Ca(2+).

The protein belongs to the phospholipase A2 family. Group II subfamily. D49 sub-subfamily. The cofactor is Ca(2+). In terms of tissue distribution, expressed by the venom gland.

Its subcellular location is the secreted. The enzyme catalyses a 1,2-diacyl-sn-glycero-3-phosphocholine + H2O = a 1-acyl-sn-glycero-3-phosphocholine + a fatty acid + H(+). Functionally, snake venom phospholipase A2 (PLA2) that causes irreversible neuromuscular blockade in chick biventer cervicis muscle preparations. The neuromuscular blockade is mediated by inhibitory action at the presynaptic motor nerve endings. PLA2 catalyzes the calcium-dependent hydrolysis of the 2-acyl groups in 3-sn-phosphoglycerides. This is Basic phospholipase A2 Bmaj-9 from Bothrops marajoensis (Marajo lancehead).